We begin with the raw amino-acid sequence, 187 residues long: Photosystem I assembly protein Ycf4 (187 aa).

The next 2 helical transmembrane spans lie at 25-47 (YWWA…SSYL) and 62-84 (FVPQ…IYLW).

This sequence belongs to the Ycf4 family.

The protein resides in the plastid. The protein localises to the chloroplast thylakoid membrane. In terms of biological role, seems to be required for the assembly of the photosystem I complex. In Mesostigma viride (Green alga), this protein is Photosystem I assembly protein Ycf4.